Consider the following 557-residue polypeptide: Formate--tetrahydrofolate ligase 2 (557 aa).

66–73 lines the ATP pocket; it reads TPAGEGKT.

It belongs to the formate--tetrahydrofolate ligase family.

It carries out the reaction (6S)-5,6,7,8-tetrahydrofolate + formate + ATP = (6R)-10-formyltetrahydrofolate + ADP + phosphate. Its pathway is one-carbon metabolism; tetrahydrofolate interconversion. In Streptococcus pyogenes serotype M28 (strain MGAS6180), this protein is Formate--tetrahydrofolate ligase 2.